A 413-amino-acid polypeptide reads, in one-letter code: NAD(P)H oxidoreductase RTN4IP1, mitochondrial (413 aa).

A mitochondrion-targeting transit peptide spans 1-23 (MTAAGFNSILCLRQLVRLNRRQY). The segment at 27-52 (AKSVLSGSQTNDQATPPPTSKSADKM) is disordered. Positions 31-40 (LSGSQTNDQA) are enriched in polar residues. The Enoyl reductase (ER) domain occupies 61–405 (GDIDELQLSE…SGHLRGKIVV (345 aa)). Residues Ser-228, Gly-230, Val-231, Ser-251, Tyr-269, Gly-353, Phe-355, His-398, and Arg-400 each contribute to the NADPH site.

This sequence belongs to the zinc-containing alcohol dehydrogenase family. Quinone oxidoreductase subfamily.

Its subcellular location is the mitochondrion matrix. The catalysed reaction is a quinone + NADH + H(+) = a quinol + NAD(+). The enzyme catalyses a quinone + NADPH + H(+) = a quinol + NADP(+). Its pathway is cofactor biosynthesis; ubiquinone biosynthesis. NAD(P)H oxidoreductase. Involved in the ubiquinone biosynthetic pathway. In Drosophila melanogaster (Fruit fly), this protein is NAD(P)H oxidoreductase RTN4IP1, mitochondrial.